We begin with the raw amino-acid sequence, 191 residues long: Peptidyl-tRNA hydrolase (191 aa).

Position 14 (Y14) interacts with tRNA. The active-site Proton acceptor is H19. Y64, N66, and N112 together coordinate tRNA.

Belongs to the PTH family. As to quaternary structure, monomer.

The protein resides in the cytoplasm. The catalysed reaction is an N-acyl-L-alpha-aminoacyl-tRNA + H2O = an N-acyl-L-amino acid + a tRNA + H(+). Hydrolyzes ribosome-free peptidyl-tRNAs (with 1 or more amino acids incorporated), which drop off the ribosome during protein synthesis, or as a result of ribosome stalling. In terms of biological role, catalyzes the release of premature peptidyl moieties from peptidyl-tRNA molecules trapped in stalled 50S ribosomal subunits, and thus maintains levels of free tRNAs and 50S ribosomes. The chain is Peptidyl-tRNA hydrolase from Lachnoclostridium phytofermentans (strain ATCC 700394 / DSM 18823 / ISDg) (Clostridium phytofermentans).